A 405-amino-acid chain; its full sequence is Palmitoyltransferase PFA3 (405 aa).

The Cytoplasmic segment spans residues 1–27; the sequence is MLISHPRIMIRHAPWVTSIETFCCSLA. The helical transmembrane segment at 28 to 48 threads the bilayer; the sequence is TLFPKVFYTSVLTWSVYALIV. Topologically, residues 49-62 are lumenal; the sequence is HGCYDTLMTTQETS. A helical transmembrane segment spans residues 63–83; it reads IFAIAIGLIGLTLYILCLYTY. At 84–214 the chain is on the cytoplasmic side; it reads FKVLRAGPGS…GFYNHKFFAQ (131 aa). Positions 167–217 constitute a DHHC domain; that stretch reads RYCTKCSVWKPDRCHHCSTCNRCVLRMDHHCPWFAMCVGFYNHKFFAQFLM. Residues 215–235 form a helical membrane-spanning segment; that stretch reads FLMYLTAYSGFDFVVSLSILW. The Lumenal segment spans residues 236–251; the sequence is KFFADEKYNDHYLSLN. Residues 252–272 form a helical membrane-spanning segment; sequence LVFLFVLSLAFFITVGGFSAF. Over 273 to 405 the chain is Cytoplasmic; the sequence is SLYLVFRNKT…ANQTTDTNPF (133 aa).

The protein belongs to the DHHC palmitoyltransferase family. PFA3 subfamily. Post-translationally, autopalmitoylated.

Its subcellular location is the vacuole membrane. It carries out the reaction L-cysteinyl-[protein] + hexadecanoyl-CoA = S-hexadecanoyl-L-cysteinyl-[protein] + CoA. In terms of biological role, palmitoyltransferase specific for VAC8. Palmitoylates VAC8 at one or more of its N-terminal cysteine residues, which is required for its proper membrane localization. This Debaryomyces hansenii (strain ATCC 36239 / CBS 767 / BCRC 21394 / JCM 1990 / NBRC 0083 / IGC 2968) (Yeast) protein is Palmitoyltransferase PFA3 (PFA3).